A 123-amino-acid chain; its full sequence is Small ribosomal subunit protein uS12 (123 aa).

Residues 1–24 (MPTINQLIRKERKKQVKKSKSPAL) are disordered. Residues 10-20 (KERKKQVKKSK) are compositionally biased toward basic residues. A 3-methylthioaspartic acid modification is found at Asp-89.

This sequence belongs to the universal ribosomal protein uS12 family. As to quaternary structure, part of the 30S ribosomal subunit. Contacts proteins S8 and S17. May interact with IF1 in the 30S initiation complex.

Its function is as follows. With S4 and S5 plays an important role in translational accuracy. Interacts with and stabilizes bases of the 16S rRNA that are involved in tRNA selection in the A site and with the mRNA backbone. Located at the interface of the 30S and 50S subunits, it traverses the body of the 30S subunit contacting proteins on the other side and probably holding the rRNA structure together. The combined cluster of proteins S8, S12 and S17 appears to hold together the shoulder and platform of the 30S subunit. The polypeptide is Small ribosomal subunit protein uS12 (Sulfurovum sp. (strain NBC37-1)).